The chain runs to 312 residues: Protein-glutamate methylesterase/protein-glutamine glutaminase (312 aa).

A Response regulatory domain is found at 5-122; it reads RVLSVDDSAL…REGMLAYSEM (118 aa). Position 56 is a 4-aspartylphosphate (Asp-56). Positions 152–307 constitute a CheB-type methylesterase domain; sequence LLSSEKLIAI…QQMLAKISAG (156 aa). Active-site residues include Ser-164, His-190, and Asp-249.

Belongs to the CheB family. In terms of processing, phosphorylated by CheA. Phosphorylation of the N-terminal regulatory domain activates the methylesterase activity.

The protein localises to the cytoplasm. The enzyme catalyses [protein]-L-glutamate 5-O-methyl ester + H2O = L-glutamyl-[protein] + methanol + H(+). It catalyses the reaction L-glutaminyl-[protein] + H2O = L-glutamyl-[protein] + NH4(+). In terms of biological role, involved in chemotaxis. Part of a chemotaxis signal transduction system that modulates chemotaxis in response to various stimuli. Catalyzes the demethylation of specific methylglutamate residues introduced into the chemoreceptors (methyl-accepting chemotaxis proteins or MCP) by CheR. Also mediates the irreversible deamidation of specific glutamine residues to glutamic acid. This chain is Protein-glutamate methylesterase/protein-glutamine glutaminase, found in Shigella boydii serotype 4 (strain Sb227).